The sequence spans 269 residues: 3-methyl-2-oxobutanoate hydroxymethyltransferase (269 aa).

The Mg(2+) site is built by aspartate 52 and aspartate 91. 3-methyl-2-oxobutanoate is bound by residues 52–53 (DT), aspartate 91, and lysine 121. Glutamate 123 is a Mg(2+) binding site. Glutamate 186 functions as the Proton acceptor in the catalytic mechanism.

It belongs to the PanB family. Homodecamer; pentamer of dimers. Mg(2+) serves as cofactor.

Its subcellular location is the cytoplasm. It catalyses the reaction 3-methyl-2-oxobutanoate + (6R)-5,10-methylene-5,6,7,8-tetrahydrofolate + H2O = 2-dehydropantoate + (6S)-5,6,7,8-tetrahydrofolate. It functions in the pathway cofactor biosynthesis; (R)-pantothenate biosynthesis; (R)-pantoate from 3-methyl-2-oxobutanoate: step 1/2. Functionally, catalyzes the reversible reaction in which hydroxymethyl group from 5,10-methylenetetrahydrofolate is transferred onto alpha-ketoisovalerate to form ketopantoate. This chain is 3-methyl-2-oxobutanoate hydroxymethyltransferase, found in Rhodopirellula baltica (strain DSM 10527 / NCIMB 13988 / SH1).